We begin with the raw amino-acid sequence, 110 residues long: UPF0060 membrane protein Bpet0062 (110 aa).

The next 4 membrane-spanning stretches (helical) occupy residues 7-27, 33-53, 63-83, and 86-106; these read LGLF…PYLW, SAWL…LLTL, AAYG…VDGV, and ATTD…IMAG.

It belongs to the UPF0060 family.

The protein localises to the cell inner membrane. The sequence is that of UPF0060 membrane protein Bpet0062 from Bordetella petrii (strain ATCC BAA-461 / DSM 12804 / CCUG 43448).